A 284-amino-acid polypeptide reads, in one-letter code: Tropomyosin (284 aa).

The disordered stretch occupies residues 1–47 (MDAIKKKMQAMKIEKDNAMDRADAAEEKARQQQERVEKLEEELRDTQ). Positions 1 to 284 (MDAIKKKMQA…DQTFQELSGY (284 aa)) form a coiled coil. A compositionally biased stretch (basic and acidic residues) spans 12-38 (KIEKDNAMDRADAAEEKARQQQERVEK).

This sequence belongs to the tropomyosin family. As to quaternary structure, homodimer.

Tropomyosin, in association with the troponin complex, plays a central role in the calcium dependent regulation of muscle contraction. In Trichinella pseudospiralis (Parasitic roundworm), this protein is Tropomyosin.